A 379-amino-acid polypeptide reads, in one-letter code: Transcription factor TIP2 (379 aa).

The tract at residues 144–184 (MVGPFESSPTPRSGGGRKRSRATAGFHGGGPANGVEKKEKQ) is disordered. The tract at residues 173 to 186 (GPANGVEKKEKQRR) is basic motif; degenerate. The region spanning 173–222 (GPANGVEKKEKQRRLRLTEKYNALMLLIPNRTKEDRATVISDAIEYIQEL) is the bHLH domain. Positions 187–222 (LRLTEKYNALMLLIPNRTKEDRATVISDAIEYIQEL) are helix-loop-helix motif.

It belongs to the bHLH protein family. Homodimer. Interacts with TDR, but not with EAT1. Highly expressed in anthers; strong expression in the middle layer and tapetum, and weak expression in the endothecium.

It is found in the nucleus. Functionally, transcription factor that binds to the E-box-containing promoter regions of the transcription factors TDR and EAT1, activating their expression. May have a role in specifying the cell pattern of the inner anther walls and functioning in meiosis progression. Required for male reproduction. Acts downstream of UDT1 and GAMYB, but upstream of TDR1 and EAT1 in pollen development. In Oryza sativa subsp. japonica (Rice), this protein is Transcription factor TIP2 (TIP2).